A 110-amino-acid chain; its full sequence is Large ribosomal subunit protein uL22 (110 aa).

Belongs to the universal ribosomal protein uL22 family. Part of the 50S ribosomal subunit.

In terms of biological role, this protein binds specifically to 23S rRNA; its binding is stimulated by other ribosomal proteins, e.g. L4, L17, and L20. It is important during the early stages of 50S assembly. It makes multiple contacts with different domains of the 23S rRNA in the assembled 50S subunit and ribosome. Its function is as follows. The globular domain of the protein is located near the polypeptide exit tunnel on the outside of the subunit, while an extended beta-hairpin is found that lines the wall of the exit tunnel in the center of the 70S ribosome. This chain is Large ribosomal subunit protein uL22, found in Halorhodospira halophila (strain DSM 244 / SL1) (Ectothiorhodospira halophila (strain DSM 244 / SL1)).